Reading from the N-terminus, the 465-residue chain is MYAYNKMGRVPELVICSFIVVTLLVIHFFSDLLRASLGGYYNQDVTLSQLVESQNSDYAWFLKLLVNCFGYSCVFVPGFLIYKYVGRINYLERGNKTFLHKAINMCITGNSGYDQLDAGTSTADKDRPAASTAPKRTSSQEAVQLLWCFGGLMISYLTWGVLQEKIMTQNYLNFTGESAKFKDSQFLVFSNRLLAFLVALAYLQWQPSPVRHRAPLYKYSYASFSNIMSAWFQYEALKFVNFPTQVLAKSCKIIPVMLMGKIMSKAKYESYEYVTALLISLGMIFFMSGSSDSSKASGVTTLTGIFLLSMYMVFDSFTANWQGSLFKSYGMTPLQMMCGVNLFSSIFTGASLSMQGGFMDSLAFATEHPKFVFDMVVLSVCSAVGQLFIYHTIDVFGPVVFTIIMTLRQAVAIMLSCFIYQHSISLLGIFGVLIVFVAIFLRVYCTQRLRAIRKRAEANKPKMAV.

The next 10 membrane-spanning stretches (helical) occupy residues 13 to 33 (LVIC…SDLL), 61 to 81 (FLKL…GFLI), 142 to 162 (AVQL…WGVL), 185 to 205 (QFLV…YLQW), 270 to 290 (SYEY…MSGS), 299 to 319 (VTTL…SFTA), 339 to 359 (GVNL…GGFM), 370 to 390 (KFVF…LFIY), 391 to 407 (HTID…IMTL), and 424 to 444 (ISLL…LRVY).

It belongs to the nucleotide-sugar transporter family. SLC35B subfamily. In terms of tissue distribution, expressed throughout embryogenesis. During oogenesis, it is expressed strongly in the nurse cells of the germline. Maternally expressed at the syncytial blastoderm stage. Zygotically expressed, from after germ-band elongation in the invaginating salivary gland placodes. Remains expressed predominantly in this tissue throughout embryogenesis, but low-level expression may also be present throughout the embryo.

It localises to the golgi apparatus membrane. Functionally, mediates the transport of adenosine 3'-phospho 5'-phosphosulfate (PAPS), from cytosol into Golgi. PAPS is a universal sulfuryl donor for sulfation events that take place in the Golgi. Required for the dorsoventral patterning, suggesting that it mediates the transport of the sulfate donor required for the sulfotransferase activity of pip (pipe). The polypeptide is Adenosine 3'-phospho 5'-phosphosulfate transporter 1 (sll) (Drosophila melanogaster (Fruit fly)).